We begin with the raw amino-acid sequence, 411 residues long: MSLEAIVFDRSEPENVSVKVLDQLLLPYTTKYVPIHTIDDGYSVIKSMQVRGAPAIAIVGSLSVLTEVQLIKHNPTSDVATLYSLVNWESTKTVLNKRLDFLLSSRPTAVNLSNSLVEIKNILKSSSDLKAFDGSLYNYVCELIDEDLANNMKMGDNGAKYLIDVLQKDGFKDEFAVLTICNTGSLATSGYGTALGVIRSLWKDSLAKTDKADSGLDNEKCPRMGHVFPLETRPYNQGSRLTAYELVYDKIPSTLITDSSIAYRIRTSPIPIKAAFVGADRIVRNGDTANKIGTLQLAVICKQFGIKFFVVAPKTTIDNVTETGDDIIVEERNPEEFKVVTGTVINPENGSLILNESGEPITGKVGIAPLEINVWNPAFDITPHELIDGIITEEGVFTKNSSGEFQLESLF.

Ser-2 carries the post-translational modification N-acetylserine. Asp-280 acts as the Proton donor in catalysis. At Ser-351 the chain carries Phosphoserine.

This sequence belongs to the eIF-2B alpha/beta/delta subunits family. MtnA subfamily. Homodimer.

It localises to the cytoplasm. It is found in the nucleus. The enzyme catalyses 5-(methylsulfanyl)-alpha-D-ribose 1-phosphate = 5-(methylsulfanyl)-D-ribulose 1-phosphate. It participates in amino-acid biosynthesis; L-methionine biosynthesis via salvage pathway; L-methionine from S-methyl-5-thio-alpha-D-ribose 1-phosphate: step 1/6. In terms of biological role, catalyzes the interconversion of methylthioribose-1-phosphate (MTR-1-P) into methylthioribulose-1-phosphate (MTRu-1-P). This Saccharomyces cerevisiae (strain RM11-1a) (Baker's yeast) protein is Methylthioribose-1-phosphate isomerase.